A 966-amino-acid chain; its full sequence is Insulin-degrading enzyme-like 2 (966 aa).

Zn(2+) is bound at residue H71. The active-site Proton acceptor is E74. Zn(2+) is bound at residue H75. The active site involves E145. A Zn(2+)-binding site is contributed by E152.

Belongs to the peptidase M16 family. The cofactor is Zn(2+).

This is Insulin-degrading enzyme-like 2 from Arabidopsis thaliana (Mouse-ear cress).